The following is a 228-amino-acid chain: Phosphatidate cytidylyltransferase (228 aa).

6 helical membrane passes run 31 to 51 (FVIA…LVGL), 65 to 85 (INYL…LIFL), 93 to 113 (LVIM…MIGG), 131 to 151 (WTGL…VSLI), 165 to 185 (IYLF…DLFI), and 206 to 226 (GVLD…CINI).

This sequence belongs to the CDS family.

Its subcellular location is the cell membrane. It carries out the reaction a 1,2-diacyl-sn-glycero-3-phosphate + CTP + H(+) = a CDP-1,2-diacyl-sn-glycerol + diphosphate. Its pathway is phospholipid metabolism; CDP-diacylglycerol biosynthesis; CDP-diacylglycerol from sn-glycerol 3-phosphate: step 3/3. This is Phosphatidate cytidylyltransferase (cdsA) from Rickettsia prowazekii (strain Madrid E).